The sequence spans 169 residues: Peptide deformylase (169 aa).

The Fe cation site is built by C91 and H133. Residue E134 is part of the active site. H137 lines the Fe cation pocket.

Belongs to the polypeptide deformylase family. Fe(2+) serves as cofactor.

It carries out the reaction N-terminal N-formyl-L-methionyl-[peptide] + H2O = N-terminal L-methionyl-[peptide] + formate. Functionally, removes the formyl group from the N-terminal Met of newly synthesized proteins. Requires at least a dipeptide for an efficient rate of reaction. N-terminal L-methionine is a prerequisite for activity but the enzyme has broad specificity at other positions. In Aliivibrio salmonicida (strain LFI1238) (Vibrio salmonicida (strain LFI1238)), this protein is Peptide deformylase.